Consider the following 418-residue polypeptide: Tyrosine--tRNA ligase (418 aa).

Residue tyrosine 39 coordinates L-tyrosine. The 'HIGH' region signature appears at 44 to 53; sequence CTADSLHVGS. The L-tyrosine site is built by tyrosine 176 and glutamine 180. The short motif at 236–240 is the 'KMSKS' region element; sequence KMGKT. ATP is bound at residue lysine 239. The region spanning 350–416 is the S4 RNA-binding domain; sequence LPLAEMMRAT…KKRHALIRVL (67 aa).

The protein belongs to the class-I aminoacyl-tRNA synthetase family. TyrS type 1 subfamily. In terms of assembly, homodimer.

The protein resides in the cytoplasm. The catalysed reaction is tRNA(Tyr) + L-tyrosine + ATP = L-tyrosyl-tRNA(Tyr) + AMP + diphosphate + H(+). In terms of biological role, catalyzes the attachment of tyrosine to tRNA(Tyr) in a two-step reaction: tyrosine is first activated by ATP to form Tyr-AMP and then transferred to the acceptor end of tRNA(Tyr). The polypeptide is Tyrosine--tRNA ligase (Rhodospirillum rubrum (strain ATCC 11170 / ATH 1.1.1 / DSM 467 / LMG 4362 / NCIMB 8255 / S1)).